Here is a 473-residue protein sequence, read N- to C-terminus: ATP synthase subunit beta (473 aa).

158 to 165 (GGAGVGKT) is a binding site for ATP.

It belongs to the ATPase alpha/beta chains family. As to quaternary structure, F-type ATPases have 2 components, CF(1) - the catalytic core - and CF(0) - the membrane proton channel. CF(1) has five subunits: alpha(3), beta(3), gamma(1), delta(1), epsilon(1). CF(0) has three main subunits: a(1), b(2) and c(9-12). The alpha and beta chains form an alternating ring which encloses part of the gamma chain. CF(1) is attached to CF(0) by a central stalk formed by the gamma and epsilon chains, while a peripheral stalk is formed by the delta and b chains.

It is found in the cell membrane. It catalyses the reaction ATP + H2O + 4 H(+)(in) = ADP + phosphate + 5 H(+)(out). Functionally, produces ATP from ADP in the presence of a proton gradient across the membrane. The catalytic sites are hosted primarily by the beta subunits. This Geobacillus thermoleovorans (Bacillus thermoleovorans) protein is ATP synthase subunit beta.